A 163-amino-acid chain; its full sequence is Probable ribosome biogenesis protein RLP24 (163 aa).

Belongs to the eukaryotic ribosomal protein eL24 family. In terms of assembly, associated with nucleolar and cytoplasmic pre-60S particles. At the end of biogenesis it dissociates from cytoplasmic pre-60S particles and is likely to be exchanged for its ribosomal homolog, RPL24.

It localises to the nucleus. Its subcellular location is the nucleolus. In terms of biological role, involved in the biogenesis of the 60S ribosomal subunit. Ensures the docking of GTPBP4/NOG1 to pre-60S particles. The sequence is that of Probable ribosome biogenesis protein RLP24 (Rsl24d1) from Rattus norvegicus (Rat).